Here is a 733-residue protein sequence, read N- to C-terminus: 1,4-alpha-glucan branching enzyme GlgB (733 aa).

Residue D413 is the Nucleophile of the active site. E466 functions as the Proton donor in the catalytic mechanism.

The protein belongs to the glycosyl hydrolase 13 family. GlgB subfamily. Monomer.

The enzyme catalyses Transfers a segment of a (1-&gt;4)-alpha-D-glucan chain to a primary hydroxy group in a similar glucan chain.. Its pathway is glycan biosynthesis; glycogen biosynthesis. Its function is as follows. Catalyzes the formation of the alpha-1,6-glucosidic linkages in glycogen by scission of a 1,4-alpha-linked oligosaccharide from growing alpha-1,4-glucan chains and the subsequent attachment of the oligosaccharide to the alpha-1,6 position. The chain is 1,4-alpha-glucan branching enzyme GlgB from Leifsonia xyli subsp. xyli (strain CTCB07).